The following is a 119-amino-acid chain: Cytochrome c55X (119 aa).

Residues 1–20 (MNAPPDFRRAASHALWLALA) form the signal peptide. Residues C51, C54, and H55 each coordinate heme c.

Post-translationally, binds 1 heme c group covalently per subunit.

It localises to the periplasm. In terms of biological role, monoheme c-type cytochrome. The chain is Cytochrome c55X (nirC) from Pseudomonas aeruginosa (strain ATCC 15692 / DSM 22644 / CIP 104116 / JCM 14847 / LMG 12228 / 1C / PRS 101 / PAO1).